We begin with the raw amino-acid sequence, 115 residues long: Large ribosomal subunit protein bL19 (115 aa).

This sequence belongs to the bacterial ribosomal protein bL19 family.

Functionally, this protein is located at the 30S-50S ribosomal subunit interface and may play a role in the structure and function of the aminoacyl-tRNA binding site. The protein is Large ribosomal subunit protein bL19 of Buchnera aphidicola subsp. Acyrthosiphon pisum (strain 5A).